A 671-amino-acid polypeptide reads, in one-letter code: MVPRNFSESQLRPEPERAPSNSTKISYRSHSSSFEADDERSSSADHDSMGPDIGSAHRDVPAQYAGEDTRLTSRKELSGWYAYGFAAEVFVICGIGSFIPITLEQLARENGVLLSDPTQPCGSSSTHLPPGLHPGSAKDSQCVIYLGGLQINTASFAMYSFSLSVLFQAILVVSISCAADHGNYRKRLLLFFAFAGSITTMLFLTVVPKVYLLGALWAIISNTCFGASFVLLNSFLPLLVRHHPKAQYGTPDFSPEFRPSSVDESPPEHSLNEPEVAVYDERSALLAHNRISSQASDVAEPFPLSKDSTSIELQLSTQISSTGIGIGYSAGLFLQCVSIVIIWLLNGTTFSLRLVLFFIGLWWFLFTIPAALWLRPRPGPPLPHTGGENSKGSRSWLAYTIYAWSSLFRTVKLARRLKDITFFLAAWFLLSDAIATVSGTAVLYAKTQLRMAPEALGLINVIATTAGVLGAFSWAAISRTLNLKPHQTILACICIFEMIPLYGLLGFLPIVKRWNVVGLQQPWEMYPLGFVYGFVLGGLSSYCRSLFGELIPPGSEAAFYALYAITDKGSSVFGPAIVGAIVDRTGEIRPAFWFLAVLVGLPAPLIYFVNVERGKKEGAKLAEIIEGFKIKDAESAGEGSRGSSIDHESGQNEGLIYPRVGENAGRGRNDI.

Polar residues-rich tracts occupy residues 1–10 (MVPRNFSESQ) and 19–34 (PSNSTKISYRSHSSSF). Positions 1–67 (MVPRNFSESQ…RDVPAQYAGE (67 aa)) are disordered. Residues Asn-5 and Asn-21 are each glycosylated (N-linked (GlcNAc...) asparagine). Positions 39 to 60 (ERSSSADHDSMGPDIGSAHRDV) are enriched in basic and acidic residues. A run of 4 helical transmembrane segments spans residues 83-103 (YGFAAEVFVICGIGSFIPITL), 155-175 (SFAMYSFSLSVLFQAILVVSI), 188-208 (LLLFFAFAGSITTMLFLTVVP), and 212-232 (LLGALWAIISNTCFGASFVLL). Positions 251-271 (PDFSPEFRPSSVDESPPEHSL) are disordered. A helical membrane pass occupies residues 324-344 (IGIGYSAGLFLQCVSIVIIWL). Asn-346 carries N-linked (GlcNAc...) asparagine glycosylation. The next 7 membrane-spanning stretches (helical) occupy residues 354 to 374 (LVLFFIGLWWFLFTIPAALWL), 422 to 442 (FFLAAWFLLSDAIATVSGTAV), 457 to 477 (GLINVIATTAGVLGAFSWAAI), 491 to 511 (ACICIFEMIPLYGLLGFLPIV), 523 to 543 (WEMYPLGFVYGFVLGGLSSYC), 560 to 582 (YALYAITDKGSSVFGPAIVGAIV), and 591 to 611 (AFWFLAVLVGLPAPLIYFVNV). The disordered stretch occupies residues 634-671 (ESAGEGSRGSSIDHESGQNEGLIYPRVGENAGRGRNDI).

Belongs to the ATG22 family.

The protein resides in the vacuole membrane. Vacuolar effluxer which mediate the efflux of amino acids resulting from autophagic degradation. The release of autophagic amino acids allows the maintenance of protein synthesis and viability during nitrogen starvation. The protein is Autophagy-related protein 22-2 (atg22-2) of Sclerotinia sclerotiorum (strain ATCC 18683 / 1980 / Ss-1) (White mold).